The chain runs to 83 residues: Bublin coiled-coil protein (83 aa).

Residues 1–25 are disordered; sequence MSGPNGDLGTPVEAGAEGEEDGFGE. The stretch at 25–74 forms a coiled coil; it reads EAEYAAINSMLDQINSCLDHLEEKNDHLHARLQELLESNRQTRLEFQQQL. A Phosphoserine modification is found at serine 82.

The protein belongs to the UPF0184 (EST00098) family.

It localises to the cell junction. The protein localises to the cytoplasm. It is found in the cytoskeleton. Essential for intermediate filament organization in intestinal cells, interacts with intermediate filament and regulates intestinal lumen morphology. This Bos taurus (Bovine) protein is Bublin coiled-coil protein (BBLN).